The following is a 168-amino-acid chain: uncharacterized protein (168 aa).

This is an uncharacterized protein from Bacillus subtilis (strain 168).